Here is a 188-residue protein sequence, read N- to C-terminus: Ribosome-recycling factor (188 aa).

This sequence belongs to the RRF family.

It is found in the cytoplasm. Its function is as follows. Responsible for the release of ribosomes from messenger RNA at the termination of protein biosynthesis. May increase the efficiency of translation by recycling ribosomes from one round of translation to another. This chain is Ribosome-recycling factor, found in Gluconobacter oxydans (strain 621H) (Gluconobacter suboxydans).